The primary structure comprises 424 residues: Kynureninase (424 aa).

Residues Leu109, Thr110, 137 to 140 (FPSD), Asp222, His225, and Tyr247 contribute to the pyridoxal 5'-phosphate site. Lys248 is modified (N6-(pyridoxal phosphate)lysine). 2 residues coordinate pyridoxal 5'-phosphate: Trp278 and Asn306.

Belongs to the kynureninase family. Homodimer. The cofactor is pyridoxal 5'-phosphate.

It catalyses the reaction L-kynurenine + H2O = anthranilate + L-alanine + H(+). It carries out the reaction 3-hydroxy-L-kynurenine + H2O = 3-hydroxyanthranilate + L-alanine + H(+). The protein operates within amino-acid degradation; L-kynurenine degradation; L-alanine and anthranilate from L-kynurenine: step 1/1. It participates in cofactor biosynthesis; NAD(+) biosynthesis; quinolinate from L-kynurenine: step 2/3. Functionally, catalyzes the cleavage of L-kynurenine (L-Kyn) and L-3-hydroxykynurenine (L-3OHKyn) into anthranilic acid (AA) and 3-hydroxyanthranilic acid (3-OHAA), respectively. This is Kynureninase from Koribacter versatilis (strain Ellin345).